Here is a 270-residue protein sequence, read N- to C-terminus: Shikimate dehydrogenase (NADP(+)) (270 aa).

Residues 14–16 (SKS) and T60 contribute to the shikimate site. K64 (proton acceptor) is an active-site residue. Residue E76 participates in NADP(+) binding. Shikimate is bound by residues N85 and D101. Residues 125 to 129 (GAGGA), 149 to 154 (NRTASR), and M213 each bind NADP(+). Shikimate is bound at residue Y215. G236 contacts NADP(+).

The protein belongs to the shikimate dehydrogenase family. Homodimer.

The enzyme catalyses shikimate + NADP(+) = 3-dehydroshikimate + NADPH + H(+). Its pathway is metabolic intermediate biosynthesis; chorismate biosynthesis; chorismate from D-erythrose 4-phosphate and phosphoenolpyruvate: step 4/7. Functionally, involved in the biosynthesis of the chorismate, which leads to the biosynthesis of aromatic amino acids. Catalyzes the reversible NADPH linked reduction of 3-dehydroshikimate (DHSA) to yield shikimate (SA). In Stutzerimonas stutzeri (strain A1501) (Pseudomonas stutzeri), this protein is Shikimate dehydrogenase (NADP(+)).